We begin with the raw amino-acid sequence, 164 residues long: Low molecular weight protein-tyrosine-phosphatase (164 aa).

Cysteine 9 functions as the Nucleophile in the catalytic mechanism. The active site involves arginine 15. Residue aspartate 128 is the Proton donor of the active site.

The protein belongs to the low molecular weight phosphotyrosine protein phosphatase family.

The enzyme catalyses O-phospho-L-tyrosyl-[protein] + H2O = L-tyrosyl-[protein] + phosphate. Its function is as follows. Acts on tyrosine phosphorylated proteins, low-MW aryl phosphates and natural and synthetic acyl phosphates. May be involved in the regulation of sulfur amino acid metabolism. The chain is Low molecular weight protein-tyrosine-phosphatase (ptpA) from Streptomyces coelicolor (strain ATCC BAA-471 / A3(2) / M145).